A 582-amino-acid chain; its full sequence is MKSIILFVLSLLLILEKQAAVMGQKGGSKGQLSSGSSRFPHRQRSQHYSGQKDKQHTESKGSSSIQHTYHVDANDHDQTQKSQQYDLNAQHKTTKSEQHLGRSQRLLNYKQKGRDHVKPKRHFRLIVIHRKGGQVHHGTQNPSQNQGNSPSGKGISSQYSNTEERLRVCGLSKEQASASGAQKGRTQGGSQSSYVLQTEELVANKQQRETQNSHRNKGHYQNVVEVREGHSSKLQTSLHPAHQHRLQHGSKDIFTTQDELLVYNKNQHQTKNLNQDQEHGRKAHKVSYQSSSTEERQFNHGEKSVQKDVPKGSISIQTEEKIYGKSQNQVSIPSQDQEHGHKENKISYQSSSTEERRLNCGEKDIQKGVSKGGISIQTEEQIHGEFQNQVTISNQDQEHGHKENKISYQSSSTEERRLNGGEKDIQKSVSKGSISIQTEEKIHGKSQNQVTIPSQDQEHGHKENKISYQSSSTEERQLNYGGKSIQKDVSQSSLSFQTEKLVEGKSQIQTPNPNQDQWSGLNAKGNSGKSADREQDLLSHEQESRYQQKSSGAHNTVNIEHEVAYDDLLTQQYNEDRNPIST.

The N-terminal stretch at 1-23 (MKSIILFVLSLLLILEKQAAVMG) is a signal peptide. Disordered regions lie at residues 25–65 (KGGS…SSSI), 91–157 (HKTT…GISS), 171–192 (LSKEQASASGAQKGRTQGGSQS), 272–366 (NLNQ…KDIQ), and 393–557 (SNQD…HNTV). A compositionally biased stretch (basic and acidic residues) spans 50–59 (GQKDKQHTES). Positions 111–134 (QKGRDHVKPKRHFRLIVIHRKGGQ) are enriched in basic residues. 2 stretches are compositionally biased toward polar residues: residues 137–157 (HGTQNPSQNQGNSPSGKGISS) and 174–192 (EQASASGAQKGRTQGGSQS). The span at 293–310 (TEERQFNHGEKSVQKDVP) shows a compositional bias: basic and acidic residues. Positions 325 to 335 (KSQNQVSIPSQ) are enriched in polar residues. 4 stretches are compositionally biased toward basic and acidic residues: residues 336–345 (DQEHGHKENK), 353–366 (TEERRLNCGEKDIQ), 396–405 (DQEHGHKENK), and 413–426 (TEERRLNGGEKDIQ). Polar residues-rich tracts occupy residues 427–437 (KSVSKGSISIQ) and 445–455 (KSQNQVTIPSQ). The span at 456 to 465 (DQEHGHKENK) shows a compositional bias: basic and acidic residues. Polar residues-rich tracts occupy residues 487–498 (KDVSQSSLSFQT) and 506–529 (SQIQTPNPNQDQWSGLNAKGNSGK). Residues 530–546 (SADREQDLLSHEQESRY) show a composition bias toward basic and acidic residues. The span at 547–557 (QQKSSGAHNTV) shows a compositional bias: polar residues.

This sequence belongs to the semenogelin family. Interacts with SERPINA5.

The protein localises to the secreted. Its function is as follows. Participates in the formation of a gel matrix (sperm coagulum) entrapping the accessory gland secretions and ejaculated spermatozoa. The sequence is that of Semenogelin-2 (SEMG2) from Colobus guereza (Mantled guereza).